The following is a 157-amino-acid chain: Urease accessory protein UreE (157 aa).

It belongs to the UreE family.

The protein resides in the cytoplasm. Involved in urease metallocenter assembly. Binds nickel. Probably functions as a nickel donor during metallocenter assembly. This is Urease accessory protein UreE from Corynebacterium glutamicum (strain R).